The chain runs to 469 residues: 3-isopropylmalate dehydratase large subunit (469 aa).

Cysteine 350, cysteine 410, and cysteine 413 together coordinate [4Fe-4S] cluster.

It belongs to the aconitase/IPM isomerase family. LeuC type 1 subfamily. Heterodimer of LeuC and LeuD. [4Fe-4S] cluster serves as cofactor.

The catalysed reaction is (2R,3S)-3-isopropylmalate = (2S)-2-isopropylmalate. It functions in the pathway amino-acid biosynthesis; L-leucine biosynthesis; L-leucine from 3-methyl-2-oxobutanoate: step 2/4. Functionally, catalyzes the isomerization between 2-isopropylmalate and 3-isopropylmalate, via the formation of 2-isopropylmaleate. The sequence is that of 3-isopropylmalate dehydratase large subunit from Brucella abortus (strain S19).